The following is a 257-amino-acid chain: UPF0246 protein LPC_0782 (257 aa).

Belongs to the UPF0246 family.

In Legionella pneumophila (strain Corby), this protein is UPF0246 protein LPC_0782.